A 370-amino-acid chain; its full sequence is Aspartate beta-hydroxylase domain-containing protein 2 (370 aa).

The Cytoplasmic segment spans residues 1–57 (MVWALPRTSSPSCIAPSYKPDSGWIKMSAEWLIDWSCLLNGLRDLIAGCIQAVRDCN). A helical membrane pass occupies residues 58–78 (SFALTTVICLLMLFAWYCYRV). Residues 79 to 370 (GKDQPRSPFA…ALDSIFAPGR (292 aa)) lie on the Lumenal side of the membrane. Residue asparagine 212 is glycosylated (N-linked (GlcNAc...) asparagine). Residues tryptophan 229 and serine 273 each coordinate 2-oxoglutarate. Residue histidine 284 coordinates Fe cation. 293-295 (RCH) lines the 2-oxoglutarate pocket. Histidine 329 lines the Fe cation pocket. Arginine 342 lines the 2-oxoglutarate pocket.

The protein belongs to the aspartyl/asparaginyl beta-hydroxylase family. Fe cation is required as a cofactor.

The protein resides in the membrane. May function as 2-oxoglutarate-dependent dioxygenase. This is Aspartate beta-hydroxylase domain-containing protein 2 (asphd2) from Xenopus tropicalis (Western clawed frog).